An 88-amino-acid polypeptide reads, in one-letter code: Acylphosphatase (88 aa).

The Acylphosphatase-like domain occupies 3–88; the sequence is AARFVVSGVV…VPPTEDFVTG (86 aa). Residues arginine 18 and asparagine 36 contribute to the active site.

The protein belongs to the acylphosphatase family.

It carries out the reaction an acyl phosphate + H2O = a carboxylate + phosphate + H(+). The chain is Acylphosphatase (acyP) from Xanthomonas oryzae pv. oryzae (strain MAFF 311018).